We begin with the raw amino-acid sequence, 122 residues long: MHPSVVRLVKPRRPERITSPILPPLPLYRAILRAHHRKLPQELRYLGDQYVKKEFKDHKKIDNPLHIVGFLTEWQDYLKQIDGGSWSHGKLSKDDLDKMSPEQIGQLHELMEATKKIGEESI.

The N-terminal 47 residues, 1–47 (MHPSVVRLVKPRRPERITSPILPPLPLYRAILRAHHRKLPQELRYLG), are a transit peptide targeting the mitochondrion.

It belongs to the complex I LYR family. SDHAF3 subfamily. In terms of assembly, interacts with the iron-sulfur protein subunit within the SDH catalytic dimer.

Its subcellular location is the mitochondrion matrix. Functionally, plays an essential role in the assembly of succinate dehydrogenase (SDH), an enzyme complex (also referred to as respiratory complex II) that is a component of both the tricarboxylic acid (TCA) cycle and the mitochondrial electron transport chain, and which couples the oxidation of succinate to fumarate with the reduction of ubiquinone (coenzyme Q) to ubiquinol. Promotes maturation of the iron-sulfur protein subunit of the SDH catalytic dimer, protecting it from the deleterious effects of oxidants. May act together with SDHAF1. The chain is Succinate dehydrogenase assembly factor 3, mitochondrial from Candida albicans (strain SC5314 / ATCC MYA-2876) (Yeast).